Consider the following 258-residue polypeptide: Acyl-[acyl-carrier-protein]--UDP-N-acetylglucosamine O-acyltransferase (258 aa).

The protein belongs to the transferase hexapeptide repeat family. LpxA subfamily. As to quaternary structure, homotrimer.

The protein resides in the cytoplasm. It catalyses the reaction a (3R)-hydroxyacyl-[ACP] + UDP-N-acetyl-alpha-D-glucosamine = a UDP-3-O-[(3R)-3-hydroxyacyl]-N-acetyl-alpha-D-glucosamine + holo-[ACP]. It functions in the pathway glycolipid biosynthesis; lipid IV(A) biosynthesis; lipid IV(A) from (3R)-3-hydroxytetradecanoyl-[acyl-carrier-protein] and UDP-N-acetyl-alpha-D-glucosamine: step 1/6. Its function is as follows. Involved in the biosynthesis of lipid A, a phosphorylated glycolipid that anchors the lipopolysaccharide to the outer membrane of the cell. This is Acyl-[acyl-carrier-protein]--UDP-N-acetylglucosamine O-acyltransferase from Neisseria meningitidis serogroup A / serotype 4A (strain DSM 15465 / Z2491).